Consider the following 464-residue polypeptide: Glutamate--tRNA ligase (464 aa).

The 'HIGH' region signature appears at 11-21; that stretch reads PSPTGYLHIGG. Residues 253 to 257 carry the 'KMSKS' region motif; that stretch reads KLSKR. K256 contributes to the ATP binding site.

Belongs to the class-I aminoacyl-tRNA synthetase family. Glutamate--tRNA ligase type 1 subfamily. As to quaternary structure, monomer.

It is found in the cytoplasm. It carries out the reaction tRNA(Glu) + L-glutamate + ATP = L-glutamyl-tRNA(Glu) + AMP + diphosphate. Functionally, catalyzes the attachment of glutamate to tRNA(Glu) in a two-step reaction: glutamate is first activated by ATP to form Glu-AMP and then transferred to the acceptor end of tRNA(Glu). The protein is Glutamate--tRNA ligase of Metamycoplasma arthritidis (strain 158L3-1) (Mycoplasma arthritidis).